Here is a 117-residue protein sequence, read N- to C-terminus: Large ribosomal subunit protein bL20c (117 aa).

It belongs to the bacterial ribosomal protein bL20 family.

It localises to the plastid. The protein resides in the chloroplast. In terms of biological role, binds directly to 23S ribosomal RNA and is necessary for the in vitro assembly process of the 50S ribosomal subunit. It is not involved in the protein synthesizing functions of that subunit. The polypeptide is Large ribosomal subunit protein bL20c (Thalassiosira pseudonana (Marine diatom)).